The following is a 211-amino-acid chain: MRLTAKQVIWLKVCLHLAGLLPFLWLVWAINHGGLGADPVKDIQHFTGRTALKFLLAALLITPLARYAKQPLLIRTRRLLGLWCFAWATLHLTSYALLELGVNNLALLGKELITRPYLTLGIISWVILLALAFTSTQSMQRKLGKHWQQLHNFVYLVAILAPIHYLWSVKIISPQPLIYAGLAVLLLALRYKKLLSLFNRLRKQAHNKLSL.

The next 6 membrane-spanning stretches (helical) occupy residues V8–W28, F54–I74, L82–V102, P116–T136, F153–S173, and I178–F198.

It belongs to the MsrQ family. Heterodimer of a catalytic subunit (MsrP) and a heme-binding subunit (MsrQ). FMN is required as a cofactor. The cofactor is heme b.

The protein localises to the cell inner membrane. Part of the MsrPQ system that repairs oxidized periplasmic proteins containing methionine sulfoxide residues (Met-O), using respiratory chain electrons. Thus protects these proteins from oxidative-stress damage caused by reactive species of oxygen and chlorine generated by the host defense mechanisms. MsrPQ is essential for the maintenance of envelope integrity under bleach stress, rescuing a wide series of structurally unrelated periplasmic proteins from methionine oxidation, including the primary periplasmic chaperone SurA and the lipoprotein Pal. MsrQ provides electrons for reduction to the reductase catalytic subunit MsrP, using the quinone pool of the respiratory chain. In Shigella flexneri, this protein is Protein-methionine-sulfoxide reductase heme-binding subunit MsrQ.